The primary structure comprises 59 residues: Cuticle protein 16 isoform D (59 aa).

The polypeptide is Cuticle protein 16 isoform D (Limulus polyphemus (Atlantic horseshoe crab)).